A 542-amino-acid polypeptide reads, in one-letter code: Adenine deaminase (542 aa).

It belongs to the metallo-dependent hydrolases superfamily. Adenine deaminase family. Mn(2+) is required as a cofactor.

The catalysed reaction is adenine + H2O + H(+) = hypoxanthine + NH4(+). The protein is Adenine deaminase of Methanosphaera stadtmanae (strain ATCC 43021 / DSM 3091 / JCM 11832 / MCB-3).